The following is a 1166-amino-acid chain: DNA-directed RNA polymerase subunit beta (1166 aa).

It belongs to the RNA polymerase beta chain family. As to quaternary structure, the RNAP catalytic core consists of 2 alpha, 1 beta, 1 beta' and 1 omega subunit. When a sigma factor is associated with the core the holoenzyme is formed, which can initiate transcription.

The catalysed reaction is RNA(n) + a ribonucleoside 5'-triphosphate = RNA(n+1) + diphosphate. In terms of biological role, DNA-dependent RNA polymerase catalyzes the transcription of DNA into RNA using the four ribonucleoside triphosphates as substrates. The polypeptide is DNA-directed RNA polymerase subunit beta (Nocardioides sp. (strain ATCC BAA-499 / JS614)).